Consider the following 453-residue polypeptide: Cobyrinate a,c-diamide synthase (453 aa).

Residues 250 to 440 (RIAVPFDEAF…IHTHTACLPD (191 aa)) enclose the GATase cobBQ-type domain. Cysteine 332 functions as the Nucleophile in the catalytic mechanism.

It belongs to the CobB/CbiA family. The cofactor is Mg(2+).

The catalysed reaction is cob(II)yrinate + 2 L-glutamine + 2 ATP + 2 H2O = cob(II)yrinate a,c diamide + 2 L-glutamate + 2 ADP + 2 phosphate + 2 H(+). It carries out the reaction Ni-sirohydrochlorin + 2 L-glutamine + 2 ATP + 2 H2O = Ni-sirohydrochlorin a,c-diamide + 2 L-glutamate + 2 ADP + 2 phosphate + 2 H(+). It participates in cofactor biosynthesis; adenosylcobalamin biosynthesis; cob(II)yrinate a,c-diamide from sirohydrochlorin (anaerobic route): step 10/10. Functionally, catalyzes the ATP-dependent amidation of the two carboxylate groups at positions a and c of cobyrinate, using either L-glutamine or ammonia as the nitrogen source. Involved in the biosynthesis of the unique nickel-containing tetrapyrrole coenzyme F430, the prosthetic group of methyl-coenzyme M reductase (MCR), which plays a key role in methanogenesis and anaerobic methane oxidation. Catalyzes the ATP-dependent amidation of the two carboxylate groups at positions a and c of Ni-sirohydrochlorin, using L-glutamine or ammonia as the nitrogen source. The chain is Cobyrinate a,c-diamide synthase from Methanosphaera stadtmanae (strain ATCC 43021 / DSM 3091 / JCM 11832 / MCB-3).